The sequence spans 216 residues: UDP-N-acetylglucosamine transferase subunit ALG14 (216 aa).

At 1 to 3 (MVC) the chain is on the lumenal side. The helical transmembrane segment at 4 to 24 (VLTLAASAGGLAVLLIVRLWA) threads the bilayer. The Cytoplasmic segment spans residues 25-216 (VLRSHPVTPR…PKSVYLGRIV (192 aa)).

This sequence belongs to the ALG14 family. Forms with ALG13 the active heterodimeric UDP-N-acetylglucosamine transferase complex.

Its subcellular location is the endoplasmic reticulum membrane. In terms of biological role, part of the UDP-N-acetylglucosamine transferase complex that operates in the biosynthetic pathway of dolichol-linked oligosaccharides, the glycan precursors employed in protein asparagine (N)-glycosylation. The assembly of dolichol-linked oligosaccharides begins on the cytosolic side of the endoplasmic reticulum membrane and finishes in its lumen. The sequential addition of sugars to dolichol pyrophosphate produces dolichol-linked oligosaccharides containing fourteen sugars, including two GlcNAcs, nine mannoses and three glucoses. Once assembled, the oligosaccharides are transferred from the lipid to nascent proteins by oligosaccharyltransferases. Functions as a protein-membrane adapter recruiting ALG13 at the cytoplasmic face of the endoplasmic reticulum, where the complex catalyzes the second step of dolichol pyrophosphate biosynthesis, transferring a beta1,4-linked N-acetylglucosamine (GlcNAc) from UDP-GlcNAc to GlcNAc-pyrophosphatedolichol (Gn-PDol) to produce N,N'-diacetylchitobiosyl diphosphodolichol. N,N'-diacetylchitobiosyl diphosphodolichol is a substrate for ALG1, the following enzyme in the biosynthetic pathway. This chain is UDP-N-acetylglucosamine transferase subunit ALG14, found in Rattus norvegicus (Rat).